Reading from the N-terminus, the 289-residue chain is Pantothenate synthetase (289 aa).

30–37 serves as a coordination point for ATP; that stretch reads MGYLHKGH. Residue His37 is the Proton donor of the active site. Residue Gln61 coordinates (R)-pantoate. Beta-alanine is bound at residue Gln61. 147–150 contacts ATP; the sequence is GEKD. Gln153 lines the (R)-pantoate pocket. Residues Val176 and 184 to 187 contribute to the ATP site; that span reads CSSR.

Belongs to the pantothenate synthetase family. Homodimer.

Its subcellular location is the cytoplasm. It carries out the reaction (R)-pantoate + beta-alanine + ATP = (R)-pantothenate + AMP + diphosphate + H(+). Its pathway is cofactor biosynthesis; (R)-pantothenate biosynthesis; (R)-pantothenate from (R)-pantoate and beta-alanine: step 1/1. Catalyzes the condensation of pantoate with beta-alanine in an ATP-dependent reaction via a pantoyl-adenylate intermediate. The polypeptide is Pantothenate synthetase (Allorhizobium ampelinum (strain ATCC BAA-846 / DSM 112012 / S4) (Agrobacterium vitis (strain S4))).